A 360-amino-acid chain; its full sequence is Peptide chain release factor 1 (360 aa).

The residue at position 235 (glutamine 235) is an N5-methylglutamine.

The protein belongs to the prokaryotic/mitochondrial release factor family. Methylated by PrmC. Methylation increases the termination efficiency of RF1.

Its subcellular location is the cytoplasm. Peptide chain release factor 1 directs the termination of translation in response to the peptide chain termination codons UAG and UAA. The sequence is that of Peptide chain release factor 1 from Burkholderia mallei (strain NCTC 10247).